Consider the following 144-residue polypeptide: Large ribosomal subunit protein uL16c (144 aa).

It belongs to the universal ribosomal protein uL16 family. As to quaternary structure, part of the 50S ribosomal subunit.

Its subcellular location is the plastid. The protein resides in the chloroplast. The protein is Large ribosomal subunit protein uL16c of Chara vulgaris (Common stonewort).